The primary structure comprises 76 residues: Small proline-rich protein 2I (76 aa).

3 repeat units span residues 21–29, 30–38, and 39–47. Residues 21–47 form a 3 X 9 AA approximate tandem repeats region; sequence KKCPEPCPPPQCPEPCPPPKCPEPCPE. Positions 40 to 53 are enriched in pro residues; sequence KCPEPCPESCPPPS. Residues 40-76 form a disordered region; the sequence is KCPEPCPESCPPPSYQQKCPPVQPPPPCQQKCPPKSK.

Belongs to the cornifin (SPRR) family. Not expressed in uterus.

It localises to the cytoplasm. In terms of biological role, cross-linked envelope protein of keratinocytes. It is a keratinocyte protein that first appears in the cell cytosol, but ultimately becomes cross-linked to membrane proteins by transglutaminase. All that results in the formation of an insoluble envelope beneath the plasma membrane. In Mus musculus (Mouse), this protein is Small proline-rich protein 2I (Sprr2i).